An 831-amino-acid chain; its full sequence is DNA polymerase I, thermostable (831 aa).

The 5'-3' exonuclease domain maps to 174–258 (RPEQWVDYRA…TDLPLEVDFG (85 aa)). Residues 409 to 831 (ERLFQTLKER…LGEDWLSAKE (423 aa)) are polymerase.

Belongs to the DNA polymerase type-A family.

It catalyses the reaction DNA(n) + a 2'-deoxyribonucleoside 5'-triphosphate = DNA(n+1) + diphosphate. In addition to polymerase activity, this DNA polymerase exhibits 5'-3' exonuclease activity. In Thermus thermophilus, this protein is DNA polymerase I, thermostable (polA).